A 61-amino-acid polypeptide reads, in one-letter code: Small ribosomal subunit protein uS14 (61 aa).

Positions 24, 27, 40, and 43 each coordinate Zn(2+).

Belongs to the universal ribosomal protein uS14 family. Zinc-binding uS14 subfamily. As to quaternary structure, part of the 30S ribosomal subunit. Contacts proteins S3 and S10. Zn(2+) serves as cofactor.

Its function is as follows. Binds 16S rRNA, required for the assembly of 30S particles and may also be responsible for determining the conformation of the 16S rRNA at the A site. The sequence is that of Small ribosomal subunit protein uS14 from Geobacter metallireducens (strain ATCC 53774 / DSM 7210 / GS-15).